The sequence spans 123 residues: uncharacterized protein (123 aa).

The next 2 membrane-spanning stretches (helical) occupy residues 55-77 (LLIH…STIL) and 92-114 (FFIN…TIVY).

It is found in the cell membrane. This is an uncharacterized protein from Pasteurella multocida (strain Pm70).